The chain runs to 686 residues: MVMDLKLIAAGLRHCGKVQAFKRGESIQAHVIKQGISQNVFIANNVISMYVDFRLLSDAHKVFDEMSERNIVTWTTMVSGYTSDGKPNKAIELYRRMLDSEEEAANEFMYSAVLKACGLVGDIQLGILVYERIGKENLRGDVVLMNSVVDMYVKNGRLIEANSSFKEILRPSSTSWNTLISGYCKAGLMDEAVTLFHRMPQPNVVSWNCLISGFVDKGSPRALEFLVRMQREGLVLDGFALPCGLKACSFGGLLTMGKQLHCCVVKSGLESSPFAISALIDMYSNCGSLIYAADVFHQEKLAVNSSVAVWNSMLSGFLINEENEAALWLLLQIYQSDLCFDSYTLSGALKICINYVNLRLGLQVHSLVVVSGYELDYIVGSILVDLHANVGNIQDAHKLFHRLPNKDIIAFSGLIRGCVKSGFNSLAFYLFRELIKLGLDADQFIVSNILKVCSSLASLGWGKQIHGLCIKKGYESEPVTATALVDMYVKCGEIDNGVVLFDGMLERDVVSWTGIIVGFGQNGRVEEAFRYFHKMINIGIEPNKVTFLGLLSACRHSGLLEEARSTLETMKSEYGLEPYLEHYYCVVDLLGQAGLFQEANELINKMPLEPDKTIWTSLLTACGTHKNAGLVTVIAEKLLKGFPDDPSVYTSLSNAYATLGMWDQLSKVREAAKKLGAKESGMSWII.

PPR repeat units follow at residues 4–38 (DLKLIAAGLRHCGKVQAFKRGESIQAHVIKQGISQ), 39–69 (NVFIANNVISMYVDFRLLSDAHKVFDEMSER), 70–104 (NIVTWTTMVSGYTSDGKPNKAIELYRRMLDSEEEA), 106–140 (NEFMYSAVLKACGLVGDIQLGILVYERIGKENLRG), 141–171 (DVVLMNSVVDMYVKNGRLIEANSSFKEILRP), 172–206 (SSTSWNTLISGYCKAGLMDEAVTLFHRMPQPNVVS), 207–236 (WNCLISGFVDKGSPRALEFLVRMQREGLVL), 237–271 (DGFALPCGLKACSFGGLLTMGKQLHCCVVKSGLES), 272–302 (SPFAISALIDMYSNCGSLIYAADVFHQEKLA), 306–340 (SVAVWNSMLSGFLINEENEAALWLLLQIYQSDLCF), 341–375 (DSYTLSGALKICINYVNLRLGLQVHSLVVVSGYEL), 376–406 (DYIVGSILVDLHANVGNIQDAHKLFHRLPNK), 407–441 (DIIAFSGLIRGCVKSGFNSLAFYLFRELIKLGLDA), 442–476 (DQFIVSNILKVCSSLASLGWGKQIHGLCIKKGYES), 477–507 (EPVTATALVDMYVKCGEIDNGVVLFDGMLER), 508–542 (DVVSWTGIIVGFGQNGRVEEAFRYFHKMINIGIEP), 543–573 (NKVTFLGLLSACRHSGLLEEARSTLETMKSE), and 579–609 (YLEHYYCVVDLLGQAGLFQEANELINKMPLE). Residues 614 to 686 (IWTSLLTACG…AKESGMSWII (73 aa)) are type E motif; degenerate.

This sequence belongs to the PPR family. PCMP-E subfamily.

The sequence is that of Pentatricopeptide repeat-containing protein At4g08210 (PCMP-E100) from Arabidopsis thaliana (Mouse-ear cress).